The chain runs to 135 residues: Large ribosomal subunit protein mL54 (135 aa).

This sequence belongs to the mitochondrion-specific ribosomal protein mL54 family. In terms of assembly, component of the mitochondrial ribosome large subunit (39S) which comprises a 16S rRNA and about 50 distinct proteins.

The protein localises to the mitochondrion. The protein is Large ribosomal subunit protein mL54 (mrpl54) of Danio rerio (Zebrafish).